A 946-amino-acid chain; its full sequence is ATP-dependent 6-phosphofructokinase subunit beta (946 aa).

The interval 1-559 (MISIVNGTST…HLANFMAMNT (559 aa)) is N-terminal catalytic PFK domain 1. ATP is bound by residues glycine 192, 256–257 (RC), and 286–289 (GDGS). Position 287 (aspartate 287) interacts with Mg(2+). Beta-D-fructose 6-phosphate contacts are provided by residues 332–334 (SID), arginine 369, 376–378 (MGR), glutamate 433, arginine 461, and 467–470 (HVQR). The active-site Proton acceptor is the aspartate 334. The tract at residues 560 to 573 (ANHEKPTLPREKRK) is interdomain linker. Positions 574–946 (KIAIINIGAP…LVGRTRLDKP (373 aa)) are C-terminal regulatory PFK domain 2. Beta-D-fructose 2,6-bisphosphate-binding positions include arginine 644, 702–706 (TISNN), 747–749 (QGG), lysine 833, 839–842 (HVQQ), and arginine 920.

It belongs to the phosphofructokinase type A (PFKA) family. ATP-dependent PFK group I subfamily. Eukaryotic two domain clade 'E' sub-subfamily. As to quaternary structure, heterooctamer of 4 alpha and 4 beta chains. Mg(2+) serves as cofactor.

Its subcellular location is the cytoplasm. The enzyme catalyses beta-D-fructose 6-phosphate + ATP = beta-D-fructose 1,6-bisphosphate + ADP + H(+). It participates in carbohydrate degradation; glycolysis; D-glyceraldehyde 3-phosphate and glycerone phosphate from D-glucose: step 3/4. Its activity is regulated as follows. Allosterically activated by ADP, AMP, or fructose 2,6-bisphosphate, and allosterically inhibited by ATP or citrate. Catalyzes the phosphorylation of D-fructose 6-phosphate to fructose 1,6-bisphosphate by ATP, the first committing step of glycolysis. The sequence is that of ATP-dependent 6-phosphofructokinase subunit beta (PFK2) from Candida albicans (Yeast).